Reading from the N-terminus, the 191-residue chain is Calcium and integrin-binding protein 1 (191 aa).

G2 is lipidated: N-myristoyl glycine. 2 consecutive EF-hand domains span residues 103–138 and 148–183; these read TPDIKSHYAFRIFDFDDDGTLDREDLSQLVNCLTGE and EMKQLIDNILEESDIDRDGTINLSEFQHVISRSPDF. Positions 116, 118, 120, 122, 127, 161, 163, 165, 167, and 172 each coordinate Ca(2+).

In terms of assembly, monomer. Interacts with the heterodimeric integrin alpha-IIb/beta3 (ITGA2B-ITGB3). Interacts with ITGA2B (via cytoplasmic domain); the interaction is direct and calcium-dependent. Interacts with the protein kinases PLK2/SNK and PRKDC (via the region immediately upstream of the kinase domain). Interacts with PLK3; the interaction inhibits PLK3 kinase activity. Interacts with PSEN2. Interacts (via C-terminus) with F8. Interacts with NBR1 (via C-terminus). Interacts with FEZ1 (via C-terminus). Interacts with UBR5 (via C-terminus); the interaction is sensitive to DNA damage, and may target CIB1 for ubiquitin-mediated degradation. Interacts with IFI6; the interaction is direct. Interacts with BCL2. Interacts with TAS1R2 (via C-terminus); the interaction is independent of the myristoylation state of CIB1. Interacts with ITPR3; the interaction occurs in a calcium dependent manner. Interacts with PTK2/FAK1. Interacts with MAP3K5; the interaction inhibits MAP3K5 activation by phosphorylation, and its subsequent interaction with TRAF2. Interacts (via C-terminal region) with STMN2 (via the N-terminal region); the interaction is direct, occurs in a calcium-dependent manner and attenuates the STMN2-induced neurite outgrowth inhibition. Interacts with SPHK1, the interaction occurs in a calcium-dependent manner. Interacts with ITGA2B (via C-terminal cytoplasmic tail); the interaction occurs upon platelet aggregation and is stabilized/increased in a calcium and magnesium-dependent manner. Interacts with PAK1 (via N-terminal region); the interaction is direct and occurs in a calcium-dependent manner. Interacts with RAC3 (via C-terminal region); the interaction induces their association with the cytoskeleton upon alpha-IIb/beta3 integrin-mediated adhesion. Interacts with ITGA5 and ITGAV. Interacts with MYO1C. Interacts with ITGA2B (via C-terminal cytoplasmic tail region). Interacts (via C-terminal region) with PPP3R1 isoform 1 and isoform 2; the interactions increase upon cardiomyocytes hypertrophy. Interacts with CACNA1C; the interaction increases upon cardiomyocytes hypertrophy. Interacts and forms a complex with TMC6 and TMC8; the interaction stabilizes each component of the complex. In terms of tissue distribution, expressed strongly in Sertoli cells, weakly in pachytene spermatocytes, round spermatids and condensing spermatids (at protein level). Expressed in testis. Expressed in cardiac myocytes and endothelial cells. Expressed in heart, liver, spleen, lung, kidney, brain and inner ear. In the inner ear, expressed in the vestibule, basilar membrane and spiral ganglion cells.

It localises to the membrane. It is found in the cell membrane. The protein resides in the sarcolemma. Its subcellular location is the apical cell membrane. The protein localises to the cell projection. It localises to the ruffle membrane. It is found in the filopodium tip. The protein resides in the growth cone. Its subcellular location is the lamellipodium. The protein localises to the cytoplasm. It localises to the cytoskeleton. It is found in the microtubule organizing center. The protein resides in the centrosome. Its subcellular location is the perinuclear region. The protein localises to the nucleus. It localises to the neuron projection. It is found in the perikaryon. Functionally, calcium-binding protein that plays a role in the regulation of numerous cellular processes, such as cell differentiation, cell division, cell proliferation, cell migration, thrombosis, angiogenesis, cardiac hypertrophy and apoptosis. Involved in bone marrow megakaryocyte differentiation by negatively regulating thrombopoietin-mediated signaling pathway. Participates in the endomitotic cell cycle of megakaryocyte, a form of mitosis in which both karyokinesis and cytokinesis are interrupted. Plays a role in integrin signaling by negatively regulating alpha-IIb/beta3 activation in thrombin-stimulated megakaryocytes preventing platelet aggregation. Up-regulates PTK2/FAK1 activity, and is also needed for the recruitment of PTK2/FAK1 to focal adhesions; it thus appears to play an important role in focal adhesion formation. Positively regulates cell migration on fibronectin in a CDC42-dependent manner, the effect being negatively regulated by PAK1. Functions as a negative regulator of stress activated MAP kinase (MAPK) signaling pathways. Down-regulates inositol 1,4,5-trisphosphate receptor-dependent calcium signaling. Involved in sphingosine kinase SPHK1 translocation to the plasma membrane in a N-myristoylation-dependent manner preventing TNF-alpha-induced apoptosis. Regulates serine/threonine-protein kinase PLK3 activity for proper completion of cell division progression. Plays a role in microtubule (MT) dynamics during neuronal development; disrupts the MT depolymerization activity of STMN2 attenuating NGF-induced neurite outgrowth and the MT reorganization at the edge of lamellipodia. Promotes cardiomyocyte hypertrophy via activation of the calcineurin/NFAT signaling pathway. Stimulates calcineurin PPP3R1 activity by mediating its anchoring to the sarcolemma. In ischemia-induced (pathological or adaptive) angiogenesis, stimulates endothelial cell proliferation, migration and microvessel formation by activating the PAK1 and ERK1/ERK2 signaling pathway. Also promotes cancer cell survival and proliferation. May regulate cell cycle and differentiation of spermatogenic germ cells, and/or differentiation of supporting Sertoli cells. Forms a complex with TMC6/EVER1 and TMC8/EVER2 in lymphocytes and keratynocytes where CIB1 stabilizes TMC6 and TMC8 levels and reciprocally. This chain is Calcium and integrin-binding protein 1 (Cib1), found in Mus musculus (Mouse).